A 369-amino-acid chain; its full sequence is GTPase Obg (369 aa).

Positions 1–159 (MKFVDEVTID…KNLKLELRVL (159 aa)) constitute an Obg domain. In terms of domain architecture, OBG-type G spans 160-334 (ADVGLLGMPN…LIHAIYSHVA (175 aa)). GTP contacts are provided by residues 166–173 (GMPNAGKS), 191–195 (FTTLH), 213–216 (DIPG), 284–287 (NKLD), and 315–317 (SAL). Mg(2+) is bound by residues Ser173 and Thr193. The disordered stretch occupies residues 339–369 (QPEEVPDPRFTTNEDLSEAAPAPDRDDPRFR).

This sequence belongs to the TRAFAC class OBG-HflX-like GTPase superfamily. OBG GTPase family. Monomer. Requires Mg(2+) as cofactor.

Its subcellular location is the cytoplasm. An essential GTPase which binds GTP, GDP and possibly (p)ppGpp with moderate affinity, with high nucleotide exchange rates and a fairly low GTP hydrolysis rate. Plays a role in control of the cell cycle, stress response, ribosome biogenesis and in those bacteria that undergo differentiation, in morphogenesis control. In Leptothrix cholodnii (strain ATCC 51168 / LMG 8142 / SP-6) (Leptothrix discophora (strain SP-6)), this protein is GTPase Obg.